Consider the following 260-residue polypeptide: Thiazole synthase (260 aa).

Catalysis depends on Lys-101, which acts as the Schiff-base intermediate with DXP. 1-deoxy-D-xylulose 5-phosphate-binding positions include Gly-162, 188-189 (AG), and 210-211 (NT).

It belongs to the ThiG family. In terms of assembly, homotetramer. Forms heterodimers with either ThiH or ThiS.

The protein localises to the cytoplasm. The catalysed reaction is [ThiS sulfur-carrier protein]-C-terminal-Gly-aminoethanethioate + 2-iminoacetate + 1-deoxy-D-xylulose 5-phosphate = [ThiS sulfur-carrier protein]-C-terminal Gly-Gly + 2-[(2R,5Z)-2-carboxy-4-methylthiazol-5(2H)-ylidene]ethyl phosphate + 2 H2O + H(+). The protein operates within cofactor biosynthesis; thiamine diphosphate biosynthesis. In terms of biological role, catalyzes the rearrangement of 1-deoxy-D-xylulose 5-phosphate (DXP) to produce the thiazole phosphate moiety of thiamine. Sulfur is provided by the thiocarboxylate moiety of the carrier protein ThiS. In vitro, sulfur can be provided by H(2)S. This Acidithiobacillus ferrooxidans (strain ATCC 23270 / DSM 14882 / CIP 104768 / NCIMB 8455) (Ferrobacillus ferrooxidans (strain ATCC 23270)) protein is Thiazole synthase.